Reading from the N-terminus, the 135-residue chain is Phosphoribosyl-AMP cyclohydrolase (135 aa).

D78 is a Mg(2+) binding site. Zn(2+) is bound at residue C79. Mg(2+)-binding residues include D80 and D82. Zn(2+)-binding residues include C96 and C103.

Belongs to the PRA-CH family. In terms of assembly, homodimer. Mg(2+) is required as a cofactor. Requires Zn(2+) as cofactor.

The protein localises to the cytoplasm. The enzyme catalyses 1-(5-phospho-beta-D-ribosyl)-5'-AMP + H2O = 1-(5-phospho-beta-D-ribosyl)-5-[(5-phospho-beta-D-ribosylamino)methylideneamino]imidazole-4-carboxamide. It participates in amino-acid biosynthesis; L-histidine biosynthesis; L-histidine from 5-phospho-alpha-D-ribose 1-diphosphate: step 3/9. Catalyzes the hydrolysis of the adenine ring of phosphoribosyl-AMP. In Cupriavidus metallidurans (strain ATCC 43123 / DSM 2839 / NBRC 102507 / CH34) (Ralstonia metallidurans), this protein is Phosphoribosyl-AMP cyclohydrolase.